The following is a 224-amino-acid chain: Transposase for insertion sequence-like element IS431mec (224 aa).

The H-T-H motif DNA-binding region spans 33–52; that stretch reads EILRERGVNVHHSTVYRWVQ. Residues 73 to 222 enclose the Integrase catalytic domain; sequence WRIDETYIKI…SPCHEISIML (150 aa).

In terms of biological role, involved in the transposition of the insertion sequence. In Staphylococcus aureus (strain NCTC 8325 / PS 47), this protein is Transposase for insertion sequence-like element IS431mec (tnp).